The primary structure comprises 116 residues: Large ribosomal subunit protein uL18 (116 aa).

This sequence belongs to the universal ribosomal protein uL18 family. Part of the 50S ribosomal subunit; part of the 5S rRNA/L5/L18/L25 subcomplex. Contacts the 5S and 23S rRNAs.

This is one of the proteins that bind and probably mediate the attachment of the 5S RNA into the large ribosomal subunit, where it forms part of the central protuberance. This is Large ribosomal subunit protein uL18 from Caulobacter vibrioides (strain ATCC 19089 / CIP 103742 / CB 15) (Caulobacter crescentus).